A 299-amino-acid polypeptide reads, in one-letter code: Phosphoribosylaminoimidazole-succinocarboxamide synthase (299 aa).

The protein belongs to the SAICAR synthetase family.

The enzyme catalyses 5-amino-1-(5-phospho-D-ribosyl)imidazole-4-carboxylate + L-aspartate + ATP = (2S)-2-[5-amino-1-(5-phospho-beta-D-ribosyl)imidazole-4-carboxamido]succinate + ADP + phosphate + 2 H(+). Its pathway is purine metabolism; IMP biosynthesis via de novo pathway; 5-amino-1-(5-phospho-D-ribosyl)imidazole-4-carboxamide from 5-amino-1-(5-phospho-D-ribosyl)imidazole-4-carboxylate: step 1/2. This is Phosphoribosylaminoimidazole-succinocarboxamide synthase from Leifsonia xyli subsp. xyli (strain CTCB07).